The following is a 163-amino-acid chain: ATP synthase subunit b (163 aa).

A helical transmembrane segment spans residues 1-21; that stretch reads MISFNLTSIVNLVGFLAFMFL.

This sequence belongs to the ATPase B chain family. In terms of assembly, F-type ATPases have 2 components, F(1) - the catalytic core - and F(0) - the membrane proton channel. F(1) has five subunits: alpha(3), beta(3), gamma(1), delta(1), epsilon(1). F(0) has three main subunits: a(1), b(2) and c(10-14). The alpha and beta chains form an alternating ring which encloses part of the gamma chain. F(1) is attached to F(0) by a central stalk formed by the gamma and epsilon chains, while a peripheral stalk is formed by the delta and b chains.

The protein resides in the cell inner membrane. Its function is as follows. F(1)F(0) ATP synthase produces ATP from ADP in the presence of a proton or sodium gradient. F-type ATPases consist of two structural domains, F(1) containing the extramembraneous catalytic core and F(0) containing the membrane proton channel, linked together by a central stalk and a peripheral stalk. During catalysis, ATP synthesis in the catalytic domain of F(1) is coupled via a rotary mechanism of the central stalk subunits to proton translocation. Component of the F(0) channel, it forms part of the peripheral stalk, linking F(1) to F(0). This chain is ATP synthase subunit b, found in Petrotoga mobilis (strain DSM 10674 / SJ95).